The following is a 560-amino-acid chain: Putative transport protein ESA_02488 (560 aa).

5 helical membrane-spanning segments follow: residues 8–28 (LLNG…LCLG), 32–52 (LGSV…LLGQ), 66–86 (FMLF…SIFF), 91–111 (NYLM…LGLG), and 158–178 (HLSL…IFGA). RCK C-terminal domains lie at 200 to 288 (RGLD…SFRN) and 292 to 373 (VFDR…RIGF). A run of 5 helical transmembrane segments spans residues 383-403 (LLAF…TFQF), 406-426 (FSFG…LGFL), 447-467 (FGLM…IGHG), 475-495 (MLFA…LFGA), and 539-559 (YAIA…IWPG).

Belongs to the AAE transporter (TC 2.A.81) family. YbjL subfamily.

It localises to the cell membrane. The protein is Putative transport protein ESA_02488 of Cronobacter sakazakii (strain ATCC BAA-894) (Enterobacter sakazakii).